We begin with the raw amino-acid sequence, 107 residues long: Chlorobenzene dioxygenase, ferredoxin component (107 aa).

Residues 4–99 (TYIMRQSDLP…IKVEGGDVHV (96 aa)) form the Rieske domain. 4 residues coordinate [2Fe-2S] cluster: cysteine 43, histidine 45, cysteine 62, and histidine 65.

Belongs to the bacterial ring-hydroxylating dioxygenase ferredoxin component family. In terms of assembly, this dioxygenase system consists of four proteins: the two subunits of the oxygenase component (TecA1 and TecA2), a ferredoxin (TecA3) and a ferredoxin reductase (TecA4). [2Fe-2S] cluster is required as a cofactor.

It participates in aromatic compound metabolism. Functionally, part of the chlorobenzene dioxygenase system that catalyzes the dihydroxylation of a range of aromatic compounds, including chlorinated benzenes and toluenes, and dinuclear aromatics such as biphenyl and dibenzo-p-dioxin. This is Chlorobenzene dioxygenase, ferredoxin component from Cupriavidus sp. (strain PS12).